The following is a 441-amino-acid chain: Peroxisome proliferator-activated receptor delta (441 aa).

The tract at residues 1 to 58 (MEQPPGEAAEVREEEEKKEVAEAEGAPELNGGPERSLPSSSYTDLSRSSSPPSLLDQL) is disordered. Residues 9–21 (AEVREEEEKKEVA) are compositionally biased toward basic and acidic residues. The span at 36–55 (SLPSSSYTDLSRSSSPPSLL) shows a compositional bias: low complexity. A DNA-binding region (nuclear receptor) is located at residues 70–145 (LNMECRVCGD…LGMSHNAIRF (76 aa)). 2 NR C4-type zinc fingers span residues 74–94 (CRVC…CEGC) and 111–133 (CERI…FQKC). Residues 211–439 (FVIHDIETLW…HPLLQEIYKD (229 aa)) enclose the NR LBD domain.

This sequence belongs to the nuclear hormone receptor family. NR1 subfamily. Heterodimer with the retinoid X receptor. Interacts (via domain NR LBD) with CRY1 and CRY2 in a ligand-dependent manner. 'Lys-48'-linked polyubiquitinated; leading to proteasomal degradation. Deubiquitinated and stabilized by OTUD3.

The protein localises to the nucleus. Ligand-activated transcription factor key mediator of energy metabolism in adipose tissues. Receptor that binds peroxisome proliferators such as hypolipidemic drugs and fatty acids. Has a preference for poly-unsaturated fatty acids, such as gamma-linoleic acid and eicosapentanoic acid. Once activated by a ligand, the receptor binds to promoter elements of target genes. Regulates the peroxisomal beta-oxidation pathway of fatty acids. Functions as a transcription activator for the acyl-CoA oxidase gene. Decreases expression of NPC1L1 once activated by a ligand. This chain is Peroxisome proliferator-activated receptor delta (PPARD), found in Canis lupus familiaris (Dog).